Consider the following 545-residue polypeptide: MTILTQSTTWQALAAHSQQIPHMRELFASDPARFSNMSLSTCGLFLDYSKNRATPETLNLLLTLAQEAKLDAKIKAMFAGDIINTTEKRAVLHTALRSTAEQTIIAEGQDIVPEVQQTLNKMQQFVTSVTSGQWKGFTGKTITDIVSIGIGGSFLGPKIVSQALRPYWMTGLNCHFVANVDGTSISEKLKLLDPETTLFIMSSKSFGTQETLTNTLTAKAWFLAKGGSQSDVAKHFVAVTSNVAKATDFGIDADNIFPMWDWVGGRYSLWSAIGLPIALLIGMDNFRSLLKGAHQMDTHFANAPLAENMPVIMGLFSLWYGNFFNAQSHVVLTYDHYLRGLPAYFQQLDMESNGKSVTLNGTHVDYSTGPVIWGGEGTNGQHAYHQLLHQGTALIPADFIMPLQSHNPIGEHHDQLASNCFGQTQALMQGRTLDEALAELSKSNLSDEEKLLIAKHKVMPGNKPSNTLLMDKLTPETLGALIALYEHRTFVQGAIWDINSFDQWGVELGKSLGNDVLARIGAEQDATALDASSNGLINLYRQGKI.

Glu-351 acts as the Proton donor in catalysis. Catalysis depends on residues His-382 and Lys-510.

It belongs to the GPI family.

It localises to the cytoplasm. The catalysed reaction is alpha-D-glucose 6-phosphate = beta-D-fructose 6-phosphate. It functions in the pathway carbohydrate biosynthesis; gluconeogenesis. Its pathway is carbohydrate degradation; glycolysis; D-glyceraldehyde 3-phosphate and glycerone phosphate from D-glucose: step 2/4. In terms of biological role, catalyzes the reversible isomerization of glucose-6-phosphate to fructose-6-phosphate. This Shewanella sp. (strain ANA-3) protein is Glucose-6-phosphate isomerase.